The chain runs to 476 residues: Bifunctional protein HldE (476 aa).

The ribokinase stretch occupies residues 1–318; it reads MKLDLTVLEQ…YTALHGDKLA (318 aa). 195–198 contributes to the ATP binding site; that stretch reads NLGE. The active site involves D264. Residues 344 to 476 form a cytidylyltransferase region; the sequence is MTNGCFDILH…MIDTILDREG (133 aa).

This sequence in the N-terminal section; belongs to the carbohydrate kinase PfkB family. In the C-terminal section; belongs to the cytidylyltransferase family. Homodimer.

The catalysed reaction is D-glycero-beta-D-manno-heptose 7-phosphate + ATP = D-glycero-beta-D-manno-heptose 1,7-bisphosphate + ADP + H(+). It carries out the reaction D-glycero-beta-D-manno-heptose 1-phosphate + ATP + H(+) = ADP-D-glycero-beta-D-manno-heptose + diphosphate. Its pathway is nucleotide-sugar biosynthesis; ADP-L-glycero-beta-D-manno-heptose biosynthesis; ADP-L-glycero-beta-D-manno-heptose from D-glycero-beta-D-manno-heptose 7-phosphate: step 1/4. It functions in the pathway nucleotide-sugar biosynthesis; ADP-L-glycero-beta-D-manno-heptose biosynthesis; ADP-L-glycero-beta-D-manno-heptose from D-glycero-beta-D-manno-heptose 7-phosphate: step 3/4. Functionally, catalyzes the phosphorylation of D-glycero-D-manno-heptose 7-phosphate at the C-1 position to selectively form D-glycero-beta-D-manno-heptose-1,7-bisphosphate. Its function is as follows. Catalyzes the ADP transfer from ATP to D-glycero-beta-D-manno-heptose 1-phosphate, yielding ADP-D-glycero-beta-D-manno-heptose. The protein is Bifunctional protein HldE of Chromohalobacter salexigens (strain ATCC BAA-138 / DSM 3043 / CIP 106854 / NCIMB 13768 / 1H11).